A 391-amino-acid polypeptide reads, in one-letter code: Elongation factor Tu (391 aa).

The tr-type G domain occupies 10 to 201; the sequence is KPHVNIGTIG…AVDEYIPTPA (192 aa). The interval 19–26 is G1; sequence GHVDHGKT. 19-26 provides a ligand contact to GTP; sequence GHVDHGKT. T26 is a Mg(2+) binding site. Positions 55–59 are G2; the sequence is GITIS. The segment at 76 to 79 is G3; it reads DCPG. GTP contacts are provided by residues 76–80 and 131–134; these read DCPGH and NKVD. The interval 131–134 is G4; the sequence is NKVD. Residues 169 to 171 form a G5 region; sequence SAL.

It belongs to the TRAFAC class translation factor GTPase superfamily. Classic translation factor GTPase family. EF-Tu/EF-1A subfamily. As to quaternary structure, monomer.

The protein localises to the cytoplasm. It carries out the reaction GTP + H2O = GDP + phosphate + H(+). Its function is as follows. GTP hydrolase that promotes the GTP-dependent binding of aminoacyl-tRNA to the A-site of ribosomes during protein biosynthesis. The protein is Elongation factor Tu of Ruegeria pomeroyi (strain ATCC 700808 / DSM 15171 / DSS-3) (Silicibacter pomeroyi).